Consider the following 485-residue polypeptide: Serine/threonine-protein kinase 4 (485 aa).

In terms of domain architecture, Protein kinase spans 30–281; sequence FDVLEKLGEG…ATELLQHPFI (252 aa). ATP is bound by residues 36–44 and Lys59; that span reads LGEGSYGSV. Asp149 functions as the Proton acceptor in the catalytic mechanism. Thr183 is modified (phosphothreonine; by autocatalysis). The SARAH domain maps to 431–478; the sequence is YSFLKDWSVAEVQLKLNSLDPMMEREIEEIHHKYQAKRQPILEAIESK.

The protein belongs to the protein kinase superfamily. STE Ser/Thr protein kinase family. STE20 subfamily. Homodimer; mediated via the coiled-coil region. It depends on Mg(2+) as a cofactor. In terms of processing, autophosphorylated on Thr-183. Post-translationally, proteolytically cleaved by caspase-3 during apoptosis at Asp-326 resulting in a 37 kDa form. Proteolytic cleavage results in kinase activation and nuclear translocation of the truncated form (MST1/N).

It localises to the cytoplasm. It is found in the nucleus. It carries out the reaction L-seryl-[protein] + ATP = O-phospho-L-seryl-[protein] + ADP + H(+). The enzyme catalyses L-threonyl-[protein] + ATP = O-phospho-L-threonyl-[protein] + ADP + H(+). With respect to regulation, the C-terminal non-catalytic region inhibits the kinase activity, the enzyme is activated by caspase-cleavage. Homodimerization and autophosphorylation of Thr-183 is also required for full activation. Stress-activated, pro-apoptotic kinase which, following caspase-cleavage, enters the nucleus and induces chromatin condensation followed by internucleosomal DNA fragmentation. Key component of the Hippo signaling pathway which plays a pivotal role in organ size control and tumor suppression by restricting proliferation and promoting apoptosis. The core of this pathway is composed of a kinase cascade wherein stk3/mst2 and stk4/mst1, in complex with its regulatory protein sav1, phosphorylates and activates lats1/2 in complex with its regulatory protein mob1, which in turn phosphorylates and inactivates yap1 oncoprotein and wwtr1/taz. Phosphorylation of yap1 by lats2 inhibits its translocation into the nucleus to regulate cellular genes important for cell proliferation, cell death, and cell migration. Phosphorylates 'Ser-14' of histone H2B (H2BS14ph) during apoptosis. The sequence is that of Serine/threonine-protein kinase 4 (stk4) from Xenopus laevis (African clawed frog).